We begin with the raw amino-acid sequence, 74 residues long: Antitoxin VapB39 (74 aa).

Functionally, antitoxin component of a type II toxin-antitoxin (TA) system. The polypeptide is Antitoxin VapB39 (vapB39) (Mycobacterium tuberculosis (strain CDC 1551 / Oshkosh)).